Consider the following 405-residue polypeptide: MKILVVNCGSSSVKYQFIDMKGEKVLCKGLAERVGIEGSRLVHKVNEDKHVIEKPMKDHEEALKLILETLLDREIGVIRDLSEISAVGHRVVHGAERFASSILIDEEVMKVLEENIHLAPLHNPPNIMGIKAVQKLLPQVPNVGVFDTAFHQSMPRKAFLYPLPYEFYEKYRIRRYGFHGTSHRYVSKRAAEILGRDYYDFKVITCHLGNGASIAAIRHGKSIDTSMGFTPLEGLVMGTRSGDIDPAIVIYMQQNLSIPVEEVYNILNKKSGVLGLSKLSSDMRDIEDAAESGNEMAQLALEIYIYRIAKYIGAYTAAMNGVDAIVFTAGVGENSPYVREKVCDYLGFLGVKIDRNLNNMKGVERIVSTPDSRVAILIVPTNEELVIARDTKQIVESGIKELKLF.

Asn7 provides a ligand contact to Mg(2+). Lys14 is a binding site for ATP. Residue Arg90 coordinates substrate. Asp147 (proton donor/acceptor) is an active-site residue. ATP-binding positions include 207–211, 282–284, and 330–334; these read HLGNG, DMR, and GVGEN. Glu383 is a binding site for Mg(2+).

The protein belongs to the acetokinase family. Homodimer. The cofactor is Mg(2+). Mn(2+) is required as a cofactor.

It is found in the cytoplasm. The enzyme catalyses acetate + ATP = acetyl phosphate + ADP. It functions in the pathway metabolic intermediate biosynthesis; acetyl-CoA biosynthesis; acetyl-CoA from acetate: step 1/2. Catalyzes the formation of acetyl phosphate from acetate and ATP. Can also catalyze the reverse reaction. In Pseudothermotoga lettingae (strain ATCC BAA-301 / DSM 14385 / NBRC 107922 / TMO) (Thermotoga lettingae), this protein is Acetate kinase.